The primary structure comprises 780 residues: 5-methyltetrahydropteroyltriglutamate--homocysteine methyltransferase (780 aa).

Residues 15-18 and K114 contribute to the 5-methyltetrahydropteroyltri-L-glutamate site; that span reads RELK. Residues 457–459 and E510 contribute to the L-homocysteine site; that span reads IGS. L-methionine-binding positions include 457 to 459 and E510; that span reads IGS. 5-methyltetrahydropteroyltri-L-glutamate-binding positions include 541–542 and W587; that span reads RC. An L-homocysteine-binding site is contributed by D625. Residue D625 coordinates L-methionine. E631 is a 5-methyltetrahydropteroyltri-L-glutamate binding site. Zn(2+)-binding residues include H667, C669, and E691. The active-site Proton donor is H720. Residue C752 coordinates Zn(2+).

This sequence belongs to the vitamin-B12 independent methionine synthase family. It depends on Zn(2+) as a cofactor.

It carries out the reaction 5-methyltetrahydropteroyltri-L-glutamate + L-homocysteine = tetrahydropteroyltri-L-glutamate + L-methionine. It participates in amino-acid biosynthesis; L-methionine biosynthesis via de novo pathway; L-methionine from L-homocysteine (MetE route): step 1/1. In terms of biological role, catalyzes the transfer of a methyl group from 5-methyltetrahydrofolate to homocysteine resulting in methionine formation. The sequence is that of 5-methyltetrahydropteroyltriglutamate--homocysteine methyltransferase from Nitratidesulfovibrio vulgaris (strain DSM 19637 / Miyazaki F) (Desulfovibrio vulgaris).